The primary structure comprises 219 residues: Ribosomal RNA small subunit methyltransferase Nep1 (219 aa).

S-adenosyl-L-methionine is bound by residues glycine 178, glycine 183, and 196-201; that span reads LYKAPL.

This sequence belongs to the class IV-like SAM-binding methyltransferase superfamily. RNA methyltransferase NEP1 family. In terms of assembly, homodimer.

The catalysed reaction is a pseudouridine in rRNA + S-adenosyl-L-methionine = an N(1)-methylpseudouridine in rRNA + S-adenosyl-L-homocysteine + H(+). Functionally, methyltransferase involved in ribosomal biogenesis. Specifically catalyzes the N1-methylation of the pseudouridine corresponding to position 914 in M.jannaschii 16S rRNA. This Thermococcus onnurineus (strain NA1) protein is Ribosomal RNA small subunit methyltransferase Nep1.